A 205-amino-acid chain; its full sequence is FMN-dependent NADH:quinone oxidoreductase (205 aa).

FMN contacts are provided by residues Ser10 and 16 to 18 (SVS).

The protein belongs to the azoreductase type 1 family. In terms of assembly, homodimer. The cofactor is FMN.

It carries out the reaction 2 a quinone + NADH + H(+) = 2 a 1,4-benzosemiquinone + NAD(+). It catalyses the reaction N,N-dimethyl-1,4-phenylenediamine + anthranilate + 2 NAD(+) = 2-(4-dimethylaminophenyl)diazenylbenzoate + 2 NADH + 2 H(+). Its function is as follows. Quinone reductase that provides resistance to thiol-specific stress caused by electrophilic quinones. In terms of biological role, also exhibits azoreductase activity. Catalyzes the reductive cleavage of the azo bond in aromatic azo compounds to the corresponding amines. This chain is FMN-dependent NADH:quinone oxidoreductase, found in Agrobacterium fabrum (strain C58 / ATCC 33970) (Agrobacterium tumefaciens (strain C58)).